Here is a 367-residue protein sequence, read N- to C-terminus: tRNA-specific 2-thiouridylase MnmA (367 aa).

ATP contacts are provided by residues 24-31 and leucine 50; that span reads AMSGGVDS. Catalysis depends on cysteine 115, which acts as the Nucleophile. Cysteines 115 and 211 form a disulfide. Glycine 139 lines the ATP pocket. Residues 161–163 are interaction with tRNA; it reads KDQ. Catalysis depends on cysteine 211, which acts as the Cysteine persulfide intermediate.

It belongs to the MnmA/TRMU family.

The protein localises to the cytoplasm. It catalyses the reaction S-sulfanyl-L-cysteinyl-[protein] + uridine(34) in tRNA + AH2 + ATP = 2-thiouridine(34) in tRNA + L-cysteinyl-[protein] + A + AMP + diphosphate + H(+). In terms of biological role, catalyzes the 2-thiolation of uridine at the wobble position (U34) of tRNA, leading to the formation of s(2)U34. The sequence is that of tRNA-specific 2-thiouridylase MnmA from Ehrlichia canis (strain Jake).